The sequence spans 394 residues: Elongation factor Tu (394 aa).

The tr-type G domain maps to lysine 10 to valine 204. The interval glycine 19–threonine 26 is G1. GTP is bound at residue glycine 19–threonine 26. Threonine 26 serves as a coordination point for Mg(2+). Residues glycine 60–serine 64 form a G2 region. Residues aspartate 81–glycine 84 form a G3 region. Residues aspartate 81–histidine 85 and asparagine 136–aspartate 139 contribute to the GTP site. The segment at asparagine 136–aspartate 139 is G4. The tract at residues serine 174 to leucine 176 is G5.

The protein belongs to the TRAFAC class translation factor GTPase superfamily. Classic translation factor GTPase family. EF-Tu/EF-1A subfamily. In terms of assembly, monomer.

Its subcellular location is the cytoplasm. The catalysed reaction is GTP + H2O = GDP + phosphate + H(+). Functionally, GTP hydrolase that promotes the GTP-dependent binding of aminoacyl-tRNA to the A-site of ribosomes during protein biosynthesis. This is Elongation factor Tu from Rickettsia conorii (strain ATCC VR-613 / Malish 7).